A 208-amino-acid chain; its full sequence is CASP-like protein 2A1 (208 aa).

The Cytoplasmic segment spans residues M1–P36. Residues V37–L57 traverse the membrane as a helical segment. Residues R58 to Y78 are Extracellular-facing. Residues L79–V99 traverse the membrane as a helical segment. The Cytoplasmic portion of the chain corresponds to P100–S108. Residues W109–A129 traverse the membrane as a helical segment. At A130–T161 the chain is on the extracellular side. Residues S162–Y182 traverse the membrane as a helical segment. Residues R183–R208 lie on the Cytoplasmic side of the membrane.

This sequence belongs to the Casparian strip membrane proteins (CASP) family. Homodimer and heterodimers.

The protein localises to the cell membrane. The sequence is that of CASP-like protein 2A1 from Sorghum bicolor (Sorghum).